Here is a 135-residue protein sequence, read N- to C-terminus: DNA-binding protein inhibitor ID-2-B (135 aa).

Residues 23–75 form the bHLH domain; sequence ARSKAPVDEPMSLLYNMNDCYSKLKELVPSIPPNKKVSKMEILQHVIDYILDL. The short motif at 108–117 is the Nuclear export signal element; the sequence is LNTDISILSL.

In terms of assembly, heterodimer with other HLH proteins.

It is found in the cytoplasm. The protein localises to the nucleus. Its function is as follows. Transcriptional regulator (lacking a basic DNA binding domain) which negatively regulates the basic helix-loop-helix (bHLH) transcription factors by forming heterodimers and inhibiting their DNA binding and transcriptional activity. Inhibits the activity of both neurogenic (neurod1/neuroD) and myogenic (myod1/myoD) bHLH factors. May play a role in the regulation of the circadian clock. The protein is DNA-binding protein inhibitor ID-2-B (id2-b) of Xenopus laevis (African clawed frog).